The primary structure comprises 277 residues: Inner kinetochore subunit sim4 (277 aa).

A coiled-coil region spans residues 96-138 (NNISDLKKNLHSNKKLEAVLKEELHQIKKFSSDLQSLKSSMGE).

The protein belongs to the CENP-K/MCM22 family. Component of the inner kinetochore constitutive centromere-associated network (CCAN) (also known as central kinetochore Sim4 complex in fission yeast), which is composed of at least cnl2, cnp3, cnp20, fta1, fta2, fta3, fta4, fta6, fta7, mal2, mhf1, mhf2, mis6, mis15, mis17, sim4 and wip1. Interacts with mis6 and dad1.

The protein resides in the nucleus. It localises to the chromosome. The protein localises to the centromere. Functionally, component of the kinetochore, a multiprotein complex that assembles on centromeric DNA and attaches chromosomes to spindle microtubules, mediating chromosome segregation and sister chromatid segregation during meiosis and mitosis. Component of the inner kinetochore constitutive centromere-associated network (CCAN), which serves as a structural platform for outer kinetochore assembly. This chain is Inner kinetochore subunit sim4 (sim4), found in Schizosaccharomyces pombe (strain 972 / ATCC 24843) (Fission yeast).